The chain runs to 401 residues: Imidazolonepropionase (401 aa).

Residues H70 and H72 each contribute to the Fe(3+) site. The Zn(2+) site is built by H70 and H72. 4-imidazolone-5-propanoate-binding residues include R79, Y142, and H175. Y142 contributes to the N-formimidoyl-L-glutamate binding site. Position 240 (H240) interacts with Fe(3+). Position 240 (H240) interacts with Zn(2+). Q243 is a 4-imidazolone-5-propanoate binding site. Residue D315 participates in Fe(3+) binding. D315 lines the Zn(2+) pocket. 2 residues coordinate N-formimidoyl-L-glutamate: N317 and G319. A 4-imidazolone-5-propanoate-binding site is contributed by S320.

It belongs to the metallo-dependent hydrolases superfamily. HutI family. The cofactor is Zn(2+). Fe(3+) serves as cofactor.

Its subcellular location is the cytoplasm. The catalysed reaction is 4-imidazolone-5-propanoate + H2O = N-formimidoyl-L-glutamate. It functions in the pathway amino-acid degradation; L-histidine degradation into L-glutamate; N-formimidoyl-L-glutamate from L-histidine: step 3/3. Its function is as follows. Catalyzes the hydrolytic cleavage of the carbon-nitrogen bond in imidazolone-5-propanoate to yield N-formimidoyl-L-glutamate. It is the third step in the universal histidine degradation pathway. In Ruegeria pomeroyi (strain ATCC 700808 / DSM 15171 / DSS-3) (Silicibacter pomeroyi), this protein is Imidazolonepropionase.